The chain runs to 257 residues: MKKTAFTLLLFIALTLTTSPLVNGSEKSEEINEKDLRKKSELQGTALGNLKQIYYYNEKAKTENKESHDQFLQHTILFKGFFTDHSWYNDLLVDFDSKDIVDKYKGKKVDLYGAYYGYQCAGGTPNKTACMYGGVTLHDNNRLTEEKKVPINLWLDGKQNTVPLETVKTNKKNVTVQELDLQARRYLQEKYNLYNSDVFDGKVQRGLIVFHTSTEPSVNYDLFGAQGQYSNTLLRIYRDNKTINSENMHIDIYLYTS.

Residues 1 to 24 form the signal peptide; sequence MKKTAFTLLLFIALTLTTSPLVNG. Cysteines 120 and 130 form a disulfide. Residues His211, His249, and Asp251 each contribute to the Zn(2+) site.

Belongs to the staphylococcal/streptococcal toxin family. Monomer. Interacts with MHC class II molecules alpha/HLA-DRB1 and beta/HLA-DRA chains. The interaction with MHC-II molecules occurs at both zinc-dependent and zinc-independent sites. Interacts with T-cell receptor beta variable 7-9/TRBV7-9. Zn(2+) is required as a cofactor.

Its subcellular location is the secreted. In terms of biological role, staphylococcal enterotoxin that activates the host immune system by binding as unprocessed molecules to major histocompatibility (MHC) complex class II and T-cell receptor (TCR) molecules. In turn, waves of cellular activation, cytokine production, and migration into the lung tissue and airways occur via alphabeta T-cells. Also causes the intoxication staphylococcal food poisoning syndrome. The illness is characterized by high fever, hypotension, diarrhea, shock, and in some cases death. This is Enterotoxin type A (entA) from Staphylococcus aureus.